A 684-amino-acid polypeptide reads, in one-letter code: Nuclear transcription factor Y subunit gamma (684 aa).

4 disordered regions span residues methionine 1–threonine 74, methionine 112–glutamine 238, histidine 414–leucine 487, and glutamine 511–glutamate 650. Residues serine 21–asparagine 49 are compositionally biased toward low complexity. Residues lysine 58–threonine 74 are compositionally biased toward polar residues. Positions histidine 142–serine 162 are enriched in low complexity. Positions serine 163–asparagine 176 are enriched in basic residues. Over residues proline 188–leucine 203 the composition is skewed to polar residues. Low complexity predominate over residues threonine 220 to glutamine 238. The span at histidine 414 to serine 423 shows a compositional bias: polar residues. Residues asparagine 424–asparagine 437 are compositionally biased toward low complexity. Composition is skewed to polar residues over residues serine 438–serine 456 and serine 464–asparagine 477. 3 stretches are compositionally biased toward low complexity: residues glutamine 478–leucine 487, glutamine 511–glutamine 522, and proline 529–asparagine 637.

This sequence belongs to the NFYC/HAP5 subunit family. In terms of assembly, heterotrimeric transcription factor composed of three components, NF-YA, NF-YB and NF-YC. NF-YB and NF-YC must interact and dimerize for NF-YA association and DNA binding.

It localises to the nucleus. In terms of biological role, stimulates the transcription of various genes by recognizing and binding to a CCAAT motif in promoters. This is Nuclear transcription factor Y subunit gamma (nfyc-1) from Dictyostelium discoideum (Social amoeba).